The following is a 120-amino-acid chain: Small ribosomal subunit protein eS17 (120 aa).

The protein belongs to the eukaryotic ribosomal protein eS17 family. Component of the small ribosomal subunit.

The protein resides in the cytoplasm. This Encephalitozoon cuniculi (strain GB-M1) (Microsporidian parasite) protein is Small ribosomal subunit protein eS17 (RPS17).